The sequence spans 77 residues: Dermatoxin-S1 (77 aa).

Residues 1 to 22 (MAFLKKSLFLILFLGLVPLSFC) form the signal peptide. Positions 23-44 (ENDKREGENEEEQDDDQSEEKR) are excised as a propeptide. Glutamine 76 bears the Glutamine amide mark.

Expressed by the skin glands.

Its subcellular location is the secreted. It localises to the target cell membrane. In terms of biological role, antimicrobial peptide with potent activity against Gram-positive bacteria B.megaterium, C.glutamicum and S.aureus and mollicutes A.laidlawii and S.melliferum. Less active against Gram-negative bacteria B.cepacia, P.aeruginosa, S.typhimurium and S.meliloti. Probably acts by disturbing membrane functions with its amphipathic structure. This Phyllomedusa sauvagei (Sauvage's leaf frog) protein is Dermatoxin-S1.